A 421-amino-acid chain; its full sequence is Gamma-glutamyl phosphate reductase (421 aa).

It belongs to the gamma-glutamyl phosphate reductase family.

It localises to the cytoplasm. It carries out the reaction L-glutamate 5-semialdehyde + phosphate + NADP(+) = L-glutamyl 5-phosphate + NADPH + H(+). Its pathway is amino-acid biosynthesis; L-proline biosynthesis; L-glutamate 5-semialdehyde from L-glutamate: step 2/2. In terms of biological role, catalyzes the NADPH-dependent reduction of L-glutamate 5-phosphate into L-glutamate 5-semialdehyde and phosphate. The product spontaneously undergoes cyclization to form 1-pyrroline-5-carboxylate. The protein is Gamma-glutamyl phosphate reductase of Acinetobacter baumannii (strain ATCC 17978 / DSM 105126 / CIP 53.77 / LMG 1025 / NCDC KC755 / 5377).